We begin with the raw amino-acid sequence, 168 residues long: Peptide deformylase 2 (168 aa).

Fe cation-binding residues include Cys91 and His133. Glu134 is an active-site residue. Fe cation is bound at residue His137.

It belongs to the polypeptide deformylase family. Fe(2+) is required as a cofactor.

It carries out the reaction N-terminal N-formyl-L-methionyl-[peptide] + H2O = N-terminal L-methionyl-[peptide] + formate. Removes the formyl group from the N-terminal Met of newly synthesized proteins. Requires at least a dipeptide for an efficient rate of reaction. N-terminal L-methionine is a prerequisite for activity but the enzyme has broad specificity at other positions. The chain is Peptide deformylase 2 from Vibrio vulnificus (strain CMCP6).